Here is a 596-residue protein sequence, read N- to C-terminus: Aspartate--tRNA(Asp/Asn) ligase (596 aa).

Residue Glu-173 coordinates L-aspartate. The tract at residues 197–200 (QLFK) is aspartate. Residue Arg-219 participates in L-aspartate binding. ATP contacts are provided by residues 219-221 (RDE) and Gln-228. An L-aspartate-binding site is contributed by His-450. Residue Glu-485 coordinates ATP. Residue Arg-492 participates in L-aspartate binding. 537-540 (GLDR) contacts ATP.

It belongs to the class-II aminoacyl-tRNA synthetase family. Type 1 subfamily. As to quaternary structure, homodimer.

The protein resides in the cytoplasm. The enzyme catalyses tRNA(Asx) + L-aspartate + ATP = L-aspartyl-tRNA(Asx) + AMP + diphosphate. Functionally, aspartyl-tRNA synthetase with relaxed tRNA specificity since it is able to aspartylate not only its cognate tRNA(Asp) but also tRNA(Asn). Reaction proceeds in two steps: L-aspartate is first activated by ATP to form Asp-AMP and then transferred to the acceptor end of tRNA(Asp/Asn). The chain is Aspartate--tRNA(Asp/Asn) ligase from Hydrogenovibrio crunogenus (strain DSM 25203 / XCL-2) (Thiomicrospira crunogena).